Here is a 300-residue protein sequence, read N- to C-terminus: Fructose-bisphosphate aldolase class 1 (300 aa).

E181 acts as the Proton acceptor in catalysis. The Schiff-base intermediate with dihydroxyacetone-P role is filled by K218.

It belongs to the class I fructose-bisphosphate aldolase family.

The catalysed reaction is beta-D-fructose 1,6-bisphosphate = D-glyceraldehyde 3-phosphate + dihydroxyacetone phosphate. Its pathway is carbohydrate degradation; glycolysis; D-glyceraldehyde 3-phosphate and glycerone phosphate from D-glucose: step 4/4. The polypeptide is Fructose-bisphosphate aldolase class 1 (fda) (Synechocystis sp. (strain ATCC 27184 / PCC 6803 / Kazusa)).